The following is a 436-amino-acid chain: Hydroxycinnamoyltransferase (436 aa).

Residues His154 and Asp383 each act as proton acceptor in the active site.

Belongs to the plant acyltransferase family. As to expression, mostly expressed in stems, and, to a lower extent, in bulbs.

It functions in the pathway phenylpropanoid metabolism. Its function is as follows. Hydroxycinnamoyl transferase that catalyzes the transfer of an acyl from p-coumaryol-CoA to various acyl acceptors. Can use feruloyl-CoA and caffeoyl-CoA as acyl donors. The chain is Hydroxycinnamoyltransferase from Narcissus pseudonarcissus (Daffodil).